The following is a 127-amino-acid chain: Small ribosomal subunit protein bS6 (127 aa).

The protein belongs to the bacterial ribosomal protein bS6 family.

Its function is as follows. Binds together with bS18 to 16S ribosomal RNA. The sequence is that of Small ribosomal subunit protein bS6 from Sulfurovum sp. (strain NBC37-1).